The sequence spans 432 residues: GTPase Obg (432 aa).

One can recognise an Obg domain in the interval 1–158; the sequence is MFVDQIKIEV…RKLKLELKVL (158 aa). Positions 159–335 constitute an OBG-type G domain; the sequence is ADVGLVGFPS…LTHRTADVLE (177 aa). Residues 165 to 172, 190 to 194, 212 to 215, 282 to 285, and 316 to 318 contribute to the GTP site; these read GFPSVGKS, FTTLV, DLPG, SKMD, and SSL. Residues Ser-172 and Thr-192 each coordinate Mg(2+). The OCT domain maps to 354-432; that stretch reads TFKEDEPAFK…IEDFTFEFVE (79 aa).

This sequence belongs to the TRAFAC class OBG-HflX-like GTPase superfamily. OBG GTPase family. As to quaternary structure, monomer. The cofactor is Mg(2+).

It is found in the cytoplasm. An essential GTPase which binds GTP, GDP and possibly (p)ppGpp with moderate affinity, with high nucleotide exchange rates and a fairly low GTP hydrolysis rate. Plays a role in control of the cell cycle, stress response, ribosome biogenesis and in those bacteria that undergo differentiation, in morphogenesis control. The polypeptide is GTPase Obg (Ligilactobacillus salivarius (strain UCC118) (Lactobacillus salivarius)).